A 230-amino-acid chain; its full sequence is Probable septum site-determining protein MinC (230 aa).

This sequence belongs to the MinC family. In terms of assembly, interacts with MinD and FtsZ.

Cell division inhibitor that blocks the formation of polar Z ring septums. Rapidly oscillates between the poles of the cell to destabilize FtsZ filaments that have formed before they mature into polar Z rings. Prevents FtsZ polymerization. The sequence is that of Probable septum site-determining protein MinC from Rhodopseudomonas palustris (strain BisA53).